The sequence spans 718 residues: Protein Smaug homolog 1 (718 aa).

Residue Ser-168 is modified to Phosphoserine. Disordered regions lie at residues 278–323 (ARGP…EEGS), 416–474 (KAYS…LQPH), and 572–601 (NRGFGQSNSLPTAGSVGGGMGRRNPRQYQI). In terms of domain architecture, SAM spans 323 to 391 (SGMKDVPAWL…ERQNLLKSLE (69 aa)). Ser-420 is modified (phosphoserine). Residue Thr-424 is modified to Phosphothreonine. Low complexity predominate over residues 453 to 466 (GAAATGATATPSAG). Residue Arg-573 is modified to Omega-N-methylarginine. Residue Ser-580 is modified to Phosphoserine.

It belongs to the SMAUG family.

It localises to the cytoplasm. The protein resides in the cell projection. It is found in the dendrite. Its subcellular location is the synapse. The protein localises to the synaptosome. Its function is as follows. Acts as a translational repressor of SRE-containing messengers. In Homo sapiens (Human), this protein is Protein Smaug homolog 1 (SAMD4A).